The primary structure comprises 325 residues: Probable exonuclease subunit 1 (325 aa).

Could consist of two subunits: D13 and D12.

In terms of biological role, possible exonuclease involved in phage DNA recombination, replication, and repair. This is Probable exonuclease subunit 1 (D12) from Escherichia coli (Enterobacteria phage T5).